The sequence spans 240 residues: Acyl-coenzyme A thioesterase THEM4 (240 aa).

The transit peptide at 1–36 (MLRSCAARLRTLGALCLPPVGRRLPGSEPRPELRSF) directs the protein to the mitochondrion. Ser-37 and Ser-38 each carry phosphoserine. 2 positions are modified to N6-succinyllysine: Lys-55 and Lys-66. Lys-74 bears the N6-acetyllysine mark. Lys-98 bears the N6-succinyllysine mark. The active-site Proton donor/acceptor is the Asp-161. Residues Asn-183, Lys-185, and 206-207 (RK) each bind substrate. Position 207 is an N6-succinyllysine (Lys-207).

It belongs to the THEM4/THEM5 thioesterase family. Homodimer and homotetramer. Interacts with AKT1 in the cytosol. Post-translationally, phosphorylated. As to expression, expressed predominantly in skeletal muscle, testis, uterus, brain and kidney. Down-regulated in glioblastoma or glioma compared to non-neoplastic brain due to promoter hypermethylation.

It localises to the cell membrane. Its subcellular location is the cell projection. It is found in the ruffle membrane. The protein localises to the cytoplasm. The protein resides in the mitochondrion. It localises to the mitochondrion inner membrane. Its subcellular location is the mitochondrion intermembrane space. It catalyses the reaction hexadecanoyl-CoA + H2O = hexadecanoate + CoA + H(+). The catalysed reaction is octanoyl-CoA + H2O = octanoate + CoA + H(+). It carries out the reaction decanoyl-CoA + H2O = decanoate + CoA + H(+). The enzyme catalyses dodecanoyl-CoA + H2O = dodecanoate + CoA + H(+). It catalyses the reaction tetradecanoyl-CoA + H2O = tetradecanoate + CoA + H(+). The catalysed reaction is (9Z)-octadecenoyl-CoA + H2O = (9Z)-octadecenoate + CoA + H(+). It carries out the reaction (5Z,8Z,11Z,14Z)-eicosatetraenoyl-CoA + H2O = (5Z,8Z,11Z,14Z)-eicosatetraenoate + CoA + H(+). In terms of biological role, has acyl-CoA thioesterase activity towards medium and long-chain (C14 to C18) fatty acyl-CoA substrates, and probably plays a role in mitochondrial fatty acid metabolism. Plays a role in the apoptotic process, possibly via its regulation of AKT1 activity. According to PubMed:11598301, inhibits AKT1 phosphorylation and activity. According to PubMed:17615157, enhances AKT1 activity by favoring its phosphorylation and translocation to plasma membrane. In Homo sapiens (Human), this protein is Acyl-coenzyme A thioesterase THEM4 (THEM4).